Consider the following 957-residue polypeptide: Glycine dehydrogenase (decarboxylating) (957 aa).

The residue at position 702 (K702) is an N6-(pyridoxal phosphate)lysine.

The protein belongs to the GcvP family. The glycine cleavage system is composed of four proteins: P, T, L and H. Pyridoxal 5'-phosphate is required as a cofactor.

The enzyme catalyses N(6)-[(R)-lipoyl]-L-lysyl-[glycine-cleavage complex H protein] + glycine + H(+) = N(6)-[(R)-S(8)-aminomethyldihydrolipoyl]-L-lysyl-[glycine-cleavage complex H protein] + CO2. The glycine cleavage system catalyzes the degradation of glycine. The P protein binds the alpha-amino group of glycine through its pyridoxal phosphate cofactor; CO(2) is released and the remaining methylamine moiety is then transferred to the lipoamide cofactor of the H protein. The sequence is that of Glycine dehydrogenase (decarboxylating) from Bradyrhizobium sp. (strain BTAi1 / ATCC BAA-1182).